Here is a 660-residue protein sequence, read N- to C-terminus: Bifunctional polymyxin resistance protein ArnA (660 aa).

Residues M1–L304 form a formyltransferase ArnAFT region. H86–I88 serves as a coordination point for (6R)-10-formyltetrahydrofolate. Residue H104 is the Proton donor; for formyltransferase activity of the active site. (6R)-10-formyltetrahydrofolate-binding positions include R114 and V136–D140. The tract at residues R314–S660 is dehydrogenase ArnADH. NAD(+)-binding positions include D347 and D368 to I369. UDP-alpha-D-glucuronate-binding positions include A393, Y398, and T432 to S433. Catalysis depends on E434, which acts as the Proton acceptor; for decarboxylase activity. Residues R460, N492, K526 to R535, and Y613 each bind UDP-alpha-D-glucuronate. Catalysis depends on R619, which acts as the Proton donor; for decarboxylase activity.

In the N-terminal section; belongs to the Fmt family. UDP-L-Ara4N formyltransferase subfamily. The protein in the C-terminal section; belongs to the NAD(P)-dependent epimerase/dehydratase family. UDP-glucuronic acid decarboxylase subfamily. As to quaternary structure, homohexamer, formed by a dimer of trimers.

The catalysed reaction is UDP-alpha-D-glucuronate + NAD(+) = UDP-beta-L-threo-pentopyranos-4-ulose + CO2 + NADH. It catalyses the reaction UDP-4-amino-4-deoxy-beta-L-arabinose + (6R)-10-formyltetrahydrofolate = UDP-4-deoxy-4-formamido-beta-L-arabinose + (6S)-5,6,7,8-tetrahydrofolate + H(+). It functions in the pathway nucleotide-sugar biosynthesis; UDP-4-deoxy-4-formamido-beta-L-arabinose biosynthesis; UDP-4-deoxy-4-formamido-beta-L-arabinose from UDP-alpha-D-glucuronate: step 1/3. It participates in nucleotide-sugar biosynthesis; UDP-4-deoxy-4-formamido-beta-L-arabinose biosynthesis; UDP-4-deoxy-4-formamido-beta-L-arabinose from UDP-alpha-D-glucuronate: step 3/3. The protein operates within bacterial outer membrane biogenesis; lipopolysaccharide biosynthesis. Bifunctional enzyme that catalyzes the oxidative decarboxylation of UDP-glucuronic acid (UDP-GlcUA) to UDP-4-keto-arabinose (UDP-Ara4O) and the addition of a formyl group to UDP-4-amino-4-deoxy-L-arabinose (UDP-L-Ara4N) to form UDP-L-4-formamido-arabinose (UDP-L-Ara4FN). The modified arabinose is attached to lipid A and is required for resistance to polymyxin and cationic antimicrobial peptides. The sequence is that of Bifunctional polymyxin resistance protein ArnA from Escherichia coli O1:K1 / APEC.